The following is a 91-amino-acid chain: MQFSSLSLVFLAVIGAIANPIAVDSELENRDVQLSKYGGECNLKTNACRYTKGGKSVFVPCGTAANKRCKSDRHHCEYDEHHKRVDCQTPV.

The signal sequence occupies residues 1-18 (MQFSSLSLVFLAVIGAIA). The propeptide occupies 19-33 (NPIAVDSELENRDVQ). Disulfide bonds link Cys-41–Cys-69, Cys-48–Cys-76, and Cys-61–Cys-87.

This sequence belongs to the antifungal protein pafB family.

Its subcellular location is the secreted. It is found in the host cytoplasm. In terms of biological role, antifungal protein; part of the gene cluster that mediates the biosynthesis of oxopyrrolidines, polyketide-amino acid hybrid compounds with feature structures of tetramic acid. Acts as an inhibitor of growth of various molds and yeasts. This Penicillium oxalicum (strain 114-2 / CGMCC 5302) (Penicillium decumbens) protein is Antifungal protein opdH.